Consider the following 106-residue polypeptide: UPF0145 protein PSEEN3024 (106 aa).

It belongs to the UPF0145 family.

This is UPF0145 protein PSEEN3024 from Pseudomonas entomophila (strain L48).